Consider the following 353-residue polypeptide: Aromatic amino acid aminotransferase (353 aa).

Lys-217 is modified (N6-(pyridoxal phosphate)lysine).

The protein belongs to the class-II pyridoxal-phosphate-dependent aminotransferase family. Homodimer. Pyridoxal 5'-phosphate is required as a cofactor.

The catalysed reaction is an aromatic L-alpha-amino acid + 2-oxoglutarate = an aromatic oxo-acid + L-glutamate. Functionally, aminotransferase that catalyzes the conversion of aromatic amino acids and 2-oxoglutarate into corresponding aromatic oxo acids and L-glutamate. The chain is Aromatic amino acid aminotransferase from Mycobacterium bovis (strain ATCC BAA-935 / AF2122/97).